The sequence spans 299 residues: MRIIVLGSAAGGGHPQWNCHTLASLRAWQQTDGAQRRTQASIAVSADGERWVLINASPDFRQQILATPALWPQHGLRHSPIEAVLLTSGEIDHIAGLLSMRESQRFSLHASSRVLGLLAQNPIFDAVNPQYVSRQPFALDTPLVLCGLQLTPFSVPGKVPLFMESRSGGDLAGSDEETLGLTIDDGRRRMHYIPGCAAMTDALRARLQSAELVFFDGTLWRDDEMVQLGVSQKTGQRMGHMSIDGPDGTIAAFAPLNVARKIFIHLNTTNPVLDTLSPEFASARASGWEVAHDGLEIAL.

It belongs to the PqqB family.

It functions in the pathway cofactor biosynthesis; pyrroloquinoline quinone biosynthesis. May be involved in the transport of PQQ or its precursor to the periplasm. In Xanthomonas euvesicatoria pv. vesicatoria (strain 85-10) (Xanthomonas campestris pv. vesicatoria), this protein is Coenzyme PQQ synthesis protein B.